The following is a 289-amino-acid chain: Rhodopsin (289 aa).

Residues 1–7 (YLVNPAA) are Extracellular-facing. A helical membrane pass occupies residues 8–32 (YAALGAYMFLLILIGFPINFLTLYV). Topologically, residues 33-44 (TLEHKKLRTPLN) are cytoplasmic. A helical transmembrane segment spans residues 45–67 (YILLNLAVANLFMVLGGFTTTMY). The Extracellular segment spans residues 68-81 (TSMHGYFVLGRLGC). A disulfide bond links Cys81 and Cys158. Residues 82–104 (NLEAFFATLGGEIALWSLVVLAI) traverse the membrane as a helical segment. The 'Ionic lock' involved in activated form stabilization motif lies at 105–107 (ERW). The Cytoplasmic portion of the chain corresponds to 105-123 (ERWIVVCKPISNFRFTEDH). The chain crosses the membrane as a helical span at residues 124–144 (AIMGLAFTWVMALACAVPPLV). The Extracellular segment spans residues 145–173 (GWSRYIPEGMQCSCGVDYYTRAEGFNNES). Asn171 carries an N-linked (GlcNAc...) asparagine glycan. Residues 174–195 (FVIYMFIVHFLIPLSVIFFCYG) traverse the membrane as a helical segment. Residues 196-223 (RLLCAVKEAPAAQQESETTQRAEKEVSR) lie on the Cytoplasmic side of the membrane. A helical membrane pass occupies residues 224 to 245 (MVVIMVIGFLVCWLPYASVAWW). Residues 246 to 257 (IFCNQGSDFGPI) are Extracellular-facing. Residues 258–279 (FMTLPSFFAKSAAIYNPMIYIC) traverse the membrane as a helical segment. At Lys267 the chain carries N6-(retinylidene)lysine. Topologically, residues 280–289 (MNKQFRHCMI) are cytoplasmic.

This sequence belongs to the G-protein coupled receptor 1 family. Opsin subfamily. In terms of processing, phosphorylated on some or all of the serine and threonine residues present in the C-terminal region. Contains one covalently linked retinal chromophore.

It localises to the membrane. It is found in the cell projection. The protein localises to the cilium. The protein resides in the photoreceptor outer segment. Functionally, photoreceptor required for image-forming vision at low light intensity. While most salt water fish species use retinal as chromophore, most freshwater fish use 3-dehydroretinal, or a mixture of retinal and 3-dehydroretinal. Light-induced isomerization of 11-cis to all-trans retinal triggers a conformational change that activates signaling via G-proteins. Subsequent receptor phosphorylation mediates displacement of the bound G-protein alpha subunit by arrestin and terminates signaling. In Abyssocottus korotneffi (Baikalian deep-water sculpin), this protein is Rhodopsin (rho).